Reading from the N-terminus, the 459-residue chain is Elongation factor 1-alpha 4 (459 aa).

Residues 5 to 242 enclose the tr-type G domain; that stretch reads KTHINIVVIG…DCIIPPQRPT (238 aa). The segment at 14-21 is G1; it reads GHVDSGKS. The G2 stretch occupies residues 70-74; the sequence is GITID. The interval 91-94 is G3; the sequence is DAPG. The G4 stretch occupies residues 153 to 156; it reads NKMD. Residues 194 to 196 form a G5 region; that stretch reads SGF. 5-glutamyl glycerylphosphorylethanolamine occurs at positions 301 and 374.

It belongs to the TRAFAC class translation factor GTPase superfamily. Classic translation factor GTPase family. EF-Tu/EF-1A subfamily.

The protein resides in the cytoplasm. This protein promotes the GTP-dependent binding of aminoacyl-tRNA to the A-site of ribosomes during protein biosynthesis. This chain is Elongation factor 1-alpha 4 (eft-4), found in Oscheius tipulae.